We begin with the raw amino-acid sequence, 431 residues long: Trigger factor (431 aa).

The region spanning 158–243 (GDLVAVETWS…VAEVSEPVVP (86 aa)) is the PPIase FKBP-type domain.

It belongs to the FKBP-type PPIase family. Tig subfamily.

The protein localises to the cytoplasm. The catalysed reaction is [protein]-peptidylproline (omega=180) = [protein]-peptidylproline (omega=0). Functionally, involved in protein export. Acts as a chaperone by maintaining the newly synthesized protein in an open conformation. Functions as a peptidyl-prolyl cis-trans isomerase. The chain is Trigger factor from Stenotrophomonas maltophilia (strain R551-3).